The following is a 204-amino-acid chain: Large ribosomal subunit protein bL25 (204 aa).

Belongs to the bacterial ribosomal protein bL25 family. CTC subfamily. In terms of assembly, part of the 50S ribosomal subunit; part of the 5S rRNA/L5/L18/L25 subcomplex. Contacts the 5S rRNA. Binds to the 5S rRNA independently of L5 and L18.

Functionally, this is one of the proteins that binds to the 5S RNA in the ribosome where it forms part of the central protuberance. This is Large ribosomal subunit protein bL25 from Bordetella bronchiseptica (strain ATCC BAA-588 / NCTC 13252 / RB50) (Alcaligenes bronchisepticus).